The chain runs to 345 residues: Cell division control protein 2 homolog 2 (345 aa).

The interval 1–44 (MQVQVQEGQTACDGSLRPLPSAGPASFVPRSLRPAPLRGTSTPD) is disordered. The region spanning 46 to 328 (YSRIEKVGEG…AYEALQHSYF (283 aa)) is the Protein kinase domain. ATP is bound by residues 52–60 (VGEGSYGIV) and lysine 75. Serine 56 carries the post-translational modification Phosphoserine. Tyrosine 57 is modified (phosphotyrosine). The active-site Proton acceptor is the aspartate 168.

Belongs to the protein kinase superfamily. CMGC Ser/Thr protein kinase family. CDC2/CDKX subfamily. As to quaternary structure, forms a stable but non-covalent complex with a regulatory subunit and with a cyclin.

It catalyses the reaction L-seryl-[protein] + ATP = O-phospho-L-seryl-[protein] + ADP + H(+). The enzyme catalyses L-threonyl-[protein] + ATP = O-phospho-L-threonyl-[protein] + ADP + H(+). With respect to regulation, phosphorylation at Ser-56 or Tyr-57 inactivates the enzyme. Functionally, probably involved in the control of the cell cycle. The sequence is that of Cell division control protein 2 homolog 2 (CRK2) from Trypanosoma brucei brucei.